Consider the following 152-residue polypeptide: 3-hydroxyacyl-[acyl-carrier-protein] dehydratase FabZ (152 aa).

Histidine 54 is a catalytic residue.

This sequence belongs to the thioester dehydratase family. FabZ subfamily.

Its subcellular location is the cytoplasm. The catalysed reaction is a (3R)-hydroxyacyl-[ACP] = a (2E)-enoyl-[ACP] + H2O. Functionally, involved in unsaturated fatty acids biosynthesis. Catalyzes the dehydration of short chain beta-hydroxyacyl-ACPs and long chain saturated and unsaturated beta-hydroxyacyl-ACPs. This Shewanella woodyi (strain ATCC 51908 / MS32) protein is 3-hydroxyacyl-[acyl-carrier-protein] dehydratase FabZ.